Reading from the N-terminus, the 628-residue chain is Methionine--tRNA ligase (628 aa).

Residues 9–19 (YYVNDVPHLGH) carry the 'HIGH' region motif. Zn(2+) is bound by residues Cys-124, Cys-127, Cys-142, and Cys-145. The 'KMSKS' region motif lies at 294–298 (KMSKS). Residue Lys-297 participates in ATP binding. The 102-residue stretch at 527–628 (DFAKIEIKVA…QLVQNGSLVG (102 aa)) folds into the tRNA-binding domain.

Belongs to the class-I aminoacyl-tRNA synthetase family. MetG type 2A subfamily. Homodimer. Zn(2+) serves as cofactor.

The protein localises to the cytoplasm. It catalyses the reaction tRNA(Met) + L-methionine + ATP = L-methionyl-tRNA(Met) + AMP + diphosphate. Is required not only for elongation of protein synthesis but also for the initiation of all mRNA translation through initiator tRNA(fMet) aminoacylation. This Campylobacter jejuni subsp. jejuni serotype O:2 (strain ATCC 700819 / NCTC 11168) protein is Methionine--tRNA ligase (metG).